The chain runs to 1379 residues: DNA-directed RNA polymerase subunit beta (1379 aa).

Belongs to the RNA polymerase beta chain family. In terms of assembly, the RNAP catalytic core consists of 2 alpha, 1 beta, 1 beta' and 1 omega subunit. When a sigma factor is associated with the core the holoenzyme is formed, which can initiate transcription.

The catalysed reaction is RNA(n) + a ribonucleoside 5'-triphosphate = RNA(n+1) + diphosphate. Its function is as follows. DNA-dependent RNA polymerase catalyzes the transcription of DNA into RNA using the four ribonucleoside triphosphates as substrates. The sequence is that of DNA-directed RNA polymerase subunit beta from Chelativorans sp. (strain BNC1).